Consider the following 327-residue polypeptide: Zinc transport protein ZntB (327 aa).

Residues 1–271 (METIYGSSLK…AMNRRTYTMS (271 aa)) lie on the Cytoplasmic side of the membrane. The helical transmembrane segment at 272–292 (LLAMIFLPTTFLTGLFGVNLG) threads the bilayer. Residues 293–300 (GIPGNEYY) are Periplasmic-facing. Residues 301–321 (LGFAIFCLLLFGLVLFVAWWL) traverse the membrane as a helical segment. Residues 322–327 (KKSKWL) lie on the Cytoplasmic side of the membrane.

It belongs to the CorA metal ion transporter (MIT) (TC 1.A.35) family.

The protein resides in the cell inner membrane. It carries out the reaction Zn(2+)(out) + H(+)(out) = Zn(2+)(in) + H(+)(in). Its function is as follows. Zinc transporter. Acts as a Zn(2+):proton symporter, which likely mediates zinc ion uptake. The protein is Zinc transport protein ZntB of Photorhabdus laumondii subsp. laumondii (strain DSM 15139 / CIP 105565 / TT01) (Photorhabdus luminescens subsp. laumondii).